Reading from the N-terminus, the 181-residue chain is RNA pyrophosphohydrolase (181 aa).

The Nudix hydrolase domain maps to 6 to 148; it reads GFRPNVGIIV…KRQVYRQALQ (143 aa). The Nudix box signature appears at 38-59; sequence GGVEANETPLEALYRELREEVG.

Belongs to the Nudix hydrolase family. RppH subfamily. Requires a divalent metal cation as cofactor.

Accelerates the degradation of transcripts by removing pyrophosphate from the 5'-end of triphosphorylated RNA, leading to a more labile monophosphorylated state that can stimulate subsequent ribonuclease cleavage. The polypeptide is RNA pyrophosphohydrolase (Halorhodospira halophila (strain DSM 244 / SL1) (Ectothiorhodospira halophila (strain DSM 244 / SL1))).